A 396-amino-acid chain; its full sequence is Elongation factor Tu (396 aa).

Positions lysine 10 to valine 206 constitute a tr-type G domain. The segment at glycine 19–threonine 26 is G1. Glycine 19–threonine 26 is a GTP binding site. Position 26 (threonine 26) interacts with Mg(2+). Residues glycine 62–asparagine 66 form a G2 region. Residues aspartate 83–glycine 86 form a G3 region. Residues aspartate 83 to histidine 87 and asparagine 138 to aspartate 141 each bind GTP. Positions asparagine 138 to aspartate 141 are G4. The G5 stretch occupies residues serine 176 to leucine 178.

It belongs to the TRAFAC class translation factor GTPase superfamily. Classic translation factor GTPase family. EF-Tu/EF-1A subfamily. As to quaternary structure, monomer.

The protein resides in the cytoplasm. It catalyses the reaction GTP + H2O = GDP + phosphate + H(+). Functionally, GTP hydrolase that promotes the GTP-dependent binding of aminoacyl-tRNA to the A-site of ribosomes during protein biosynthesis. The polypeptide is Elongation factor Tu (Arthrobacter sp. (strain FB24)).